The primary structure comprises 273 residues: WIMGHMVNSIAQIDEFVKLGANSTETDVSFDKQANPEYTYHGTPCDCGRDCLHWENFNDFPKGLRKATTPGDSKYREKLILVVFDLKTGSLYDNQAYDAGTKLAKNLLEHYWNNGNNGGRAYIVLSIPNLNHYKLIEGFKETLKKEGHEDLLEKVGHDFSGNDDIPDVEKAYKKAGVTGHVWQSDGITNCLLRGLSRVKLAVANRDSGNEFINKVYYWTVDKRSTTRDSLDAGVDGIMTNYPDVIADVLNEAAYKKKFRVATYDDNPWETFKP.

The active site involves His5. Mg(2+)-binding residues include Glu25 and Asp27. His41 acts as the Nucleophile in catalysis. 2 disulfide bridges follow: Cys45–Cys51 and Cys47–Cys190. Position 85 (Asp85) interacts with Mg(2+).

The protein belongs to the arthropod phospholipase D family. Class II subfamily. Mg(2+) is required as a cofactor. As to expression, expressed by the venom gland.

It localises to the secreted. The catalysed reaction is an N-(acyl)-sphingosylphosphocholine = an N-(acyl)-sphingosyl-1,3-cyclic phosphate + choline. It carries out the reaction an N-(acyl)-sphingosylphosphoethanolamine = an N-(acyl)-sphingosyl-1,3-cyclic phosphate + ethanolamine. The enzyme catalyses a 1-acyl-sn-glycero-3-phosphocholine = a 1-acyl-sn-glycero-2,3-cyclic phosphate + choline. It catalyses the reaction a 1-acyl-sn-glycero-3-phosphoethanolamine = a 1-acyl-sn-glycero-2,3-cyclic phosphate + ethanolamine. Its function is as follows. Dermonecrotic toxins cleave the phosphodiester linkage between the phosphate and headgroup of certain phospholipids (sphingolipid and lysolipid substrates), forming an alcohol (often choline) and a cyclic phosphate. This toxin acts on sphingomyelin (SM). It may also act on ceramide phosphoethanolamine (CPE), lysophosphatidylcholine (LPC) and lysophosphatidylethanolamine (LPE), but not on lysophosphatidylserine (LPS), and lysophosphatidylglycerol (LPG). It acts by transphosphatidylation, releasing exclusively cyclic phosphate products as second products. Induces dermonecrosis, hemolysis, increased vascular permeability, edema, inflammatory response, and platelet aggregation. This Loxosceles rufescens (Mediterranean recluse spider) protein is Dermonecrotic toxin LruSicTox-alphaIC1a.